Reading from the N-terminus, the 1220-residue chain is DNA polymerase catalytic subunit (1220 aa).

Disordered regions lie at residues 21-43 (GKRP…RPPQ) and 641-691 (QADA…KPGV). Over residues 646-660 (SETSELAMDSQSHAF) the composition is skewed to polar residues.

The protein belongs to the DNA polymerase type-B family. In terms of assembly, forms a complex with the ssDNA-binding protein, the DNA polymerase processivity factor, and the alkaline exonuclease. Interacts with the helicase-primase complex composed of the primase, the helicase and the primase-associated factor; this interaction may coordinate leading and lagging strand DNA synthesis at the replication fork.

The protein resides in the host nucleus. It catalyses the reaction DNA(n) + a 2'-deoxyribonucleoside 5'-triphosphate = DNA(n+1) + diphosphate. The catalysed reaction is Endonucleolytic cleavage to 5'-phosphomonoester.. Replicates viral genomic DNA. The replication complex is composed of six viral proteins: the DNA polymerase, processivity factor, primase, primase-associated factor, helicase, and ssDNA-binding protein. Additionally, the polymerase contains an intrinsic ribonuclease H (RNase H) activity that specifically degrades RNA/DNA heteroduplexes or duplex DNA substrates in the 5' to 3' direction. Therefore, it can catalyze the excision of the RNA primers that initiate the synthesis of Okazaki fragments at a replication fork during viral DNA replication. The chain is DNA polymerase catalytic subunit from Equus caballus (Horse).